Reading from the N-terminus, the 407-residue chain is 1-deoxy-D-xylulose 5-phosphate reductoisomerase (407 aa).

6 residues coordinate NADPH: threonine 25, glycine 26, serine 27, isoleucine 28, asparagine 53, and asparagine 136. Position 137 (lysine 137) interacts with 1-deoxy-D-xylulose 5-phosphate. Glutamate 138 is a binding site for NADPH. Residue aspartate 162 participates in Mn(2+) binding. Residues serine 163, glutamate 164, serine 188, and histidine 211 each coordinate 1-deoxy-D-xylulose 5-phosphate. Residue glutamate 164 coordinates Mn(2+). Residue glycine 217 coordinates NADPH. 4 residues coordinate 1-deoxy-D-xylulose 5-phosphate: serine 224, asparagine 229, lysine 230, and glutamate 233. Glutamate 233 contacts Mn(2+).

It belongs to the DXR family. Mg(2+) is required as a cofactor. Mn(2+) serves as cofactor.

It carries out the reaction 2-C-methyl-D-erythritol 4-phosphate + NADP(+) = 1-deoxy-D-xylulose 5-phosphate + NADPH + H(+). It participates in isoprenoid biosynthesis; isopentenyl diphosphate biosynthesis via DXP pathway; isopentenyl diphosphate from 1-deoxy-D-xylulose 5-phosphate: step 1/6. Its function is as follows. Catalyzes the NADPH-dependent rearrangement and reduction of 1-deoxy-D-xylulose-5-phosphate (DXP) to 2-C-methyl-D-erythritol 4-phosphate (MEP). This is 1-deoxy-D-xylulose 5-phosphate reductoisomerase from Bradyrhizobium diazoefficiens (strain JCM 10833 / BCRC 13528 / IAM 13628 / NBRC 14792 / USDA 110).